Reading from the N-terminus, the 122-residue chain is Large ribosomal subunit protein uL18 (122 aa).

It belongs to the universal ribosomal protein uL18 family. Part of the 50S ribosomal subunit; part of the 5S rRNA/L5/L18/L25 subcomplex. Contacts the 5S and 23S rRNAs.

Functionally, this is one of the proteins that bind and probably mediate the attachment of the 5S RNA into the large ribosomal subunit, where it forms part of the central protuberance. This Mycobacterium ulcerans (strain Agy99) protein is Large ribosomal subunit protein uL18.